Consider the following 428-residue polypeptide: Enolase (428 aa).

Q162 provides a ligand contact to (2R)-2-phosphoglycerate. Residue E204 is the Proton donor of the active site. D241, E286, and D313 together coordinate Mg(2+). (2R)-2-phosphoglycerate-binding residues include K338, R367, S368, and K389. K338 serves as the catalytic Proton acceptor.

The protein belongs to the enolase family. Component of the RNA degradosome, a multiprotein complex involved in RNA processing and mRNA degradation. Mg(2+) serves as cofactor.

The protein localises to the cytoplasm. Its subcellular location is the secreted. The protein resides in the cell surface. The catalysed reaction is (2R)-2-phosphoglycerate = phosphoenolpyruvate + H2O. The protein operates within carbohydrate degradation; glycolysis; pyruvate from D-glyceraldehyde 3-phosphate: step 4/5. Functionally, catalyzes the reversible conversion of 2-phosphoglycerate (2-PG) into phosphoenolpyruvate (PEP). It is essential for the degradation of carbohydrates via glycolysis. The chain is Enolase from Vesicomyosocius okutanii subsp. Calyptogena okutanii (strain HA).